Consider the following 347-residue polypeptide: MSYKIVALPGDGIGPEILSGTLELLKLISEKYHFEYHLESHHFGGVSIDYYGTPLTNETLQSCKNADAILLGAIGGPKWTDPNNRPEHGLLKLRKSLNLFANIRPTFVTKGASHLSPLKQDIVEGTDLVIVRELTSGIYFGEPSYVKKTEALDSLKYSSQEIERIVRIAFNLANRRRKKLTSVDKENVLSSSKLWRQIVNDVKKDYPEVEVNHMLVDACSMHLITQPTQFDVIVTENLFGDILSDEASVIPGSLGLSPSASFGQTGTRLYEPIHGSAPDIANEDKANPFGMVLSLALCLRESLNQNDAANELESIVYSFIQSNKTTADLGGQYRTSKIFKLLKEKYL.

76-87 (GPKWTDPNNRPE) contributes to the NAD(+) binding site. Substrate contacts are provided by R94, R104, R132, and D217. Mg(2+) is bound by residues D217, D241, and D245. 275–287 (GSAPDIANEDKAN) contacts NAD(+).

Belongs to the isocitrate and isopropylmalate dehydrogenases family. LeuB type 1 subfamily. Homodimer. It depends on Mg(2+) as a cofactor. Mn(2+) is required as a cofactor.

The protein localises to the cytoplasm. The enzyme catalyses (2R,3S)-3-isopropylmalate + NAD(+) = 4-methyl-2-oxopentanoate + CO2 + NADH. The protein operates within amino-acid biosynthesis; L-leucine biosynthesis; L-leucine from 3-methyl-2-oxobutanoate: step 3/4. Functionally, catalyzes the oxidation of 3-carboxy-2-hydroxy-4-methylpentanoate (3-isopropylmalate) to 3-carboxy-4-methyl-2-oxopentanoate. The product decarboxylates to 4-methyl-2 oxopentanoate. This Staphylococcus epidermidis (strain ATCC 12228 / FDA PCI 1200) protein is 3-isopropylmalate dehydrogenase.